The primary structure comprises 64 residues: Bubble protein (64 aa).

4 disulfide bridges follow: cysteine 3/cysteine 30, cysteine 18/cysteine 38, cysteine 28/cysteine 54, and cysteine 49/cysteine 64.

It localises to the secreted. In terms of biological role, may act as a toxin. May recognize a molecule or part of a molecule with a negatively charged surface potential. The sequence is that of Bubble protein from Penicillium brevicompactum.